Reading from the N-terminus, the 410-residue chain is Histone-lysine N-methyltransferase SUV39H2 (410 aa).

One can recognise a Chromo domain in the interval 47–105; the sequence is YEVEYLCDYKVVKDMEYYLVKWKGWPDSTNTWEPLQNLKCPLLLQQFSNDKHNYLSQVK. Positions 189–247 constitute a Pre-SET domain; the sequence is FGCSCTDCFFQKCCPAEAGVLLAYNKNQQIKIPPGTPIYECNSRCQCGPDCPNRIVQKG. Residues Cys191, Cys193, Cys196, Cys201, Cys202, Cys229, Cys233, Cys235, and Cys239 each coordinate Zn(2+). The 124-residue stretch at 250–373 folds into the SET domain; sequence YSLCIFRTSN…AGEELTFDYQ (124 aa). S-adenosyl-L-methionine is bound by residues 261-263, Tyr304, and 330-331; these read RGW and NH. Cys333 lines the Zn(2+) pocket. 3 positions are modified to phosphoserine: Ser381, Ser384, and Ser388. The Post-SET domain maps to 394-410; sequence VRTVCKCGAVTCRGYLN. The Zn(2+) site is built by Cys398, Cys400, and Cys405.

This sequence belongs to the class V-like SAM-binding methyltransferase superfamily. Histone-lysine methyltransferase family. Suvar3-9 subfamily. In terms of assembly, interacts with SMAD5. The large PER complex involved in the histone methylation is composed of at least PER2, CBX3, TRIM28, SUV39H1 and/or SUV39H2; CBX3 mediates the formation of the complex. Post-translationally, ubiquitinated by the DCX(DCAF13) E3 ubiquitin ligase complex, leading to its degradation.

The protein resides in the nucleus. It localises to the chromosome. Its subcellular location is the centromere. It carries out the reaction L-lysyl(9)-[histone H3] + 3 S-adenosyl-L-methionine = N(6),N(6),N(6)-trimethyl-L-lysyl(9)-[histone H3] + 3 S-adenosyl-L-homocysteine + 3 H(+). Its function is as follows. Histone methyltransferase that specifically trimethylates 'Lys-9' of histone H3 using monomethylated H3 'Lys-9' as substrate. H3 'Lys-9' trimethylation represents a specific tag for epigenetic transcriptional repression by recruiting HP1 (CBX1, CBX3 and/or CBX5) proteins to methylated histones. Mainly functions in heterochromatin regions, thereby playing a central role in the establishment of constitutive heterochromatin at pericentric and telomere regions. H3 'Lys-9' trimethylation is also required to direct DNA methylation at pericentric repeats. SUV39H1 is targeted to histone H3 via its interaction with RB1 and is involved in many processes, such as cell cycle regulation, transcriptional repression and regulation of telomere length. May participate in regulation of higher-order chromatin organization during spermatogenesis. Recruited by the large PER complex to the E-box elements of the circadian target genes such as PER2 itself or PER1, contributes to the conversion of local chromatin to a heterochromatin-like repressive state through H3 'Lys-9' trimethylation. The protein is Histone-lysine N-methyltransferase SUV39H2 (SUV39H2) of Macaca fascicularis (Crab-eating macaque).